A 67-amino-acid chain; its full sequence is ATP synthase F(0) complex subunit 8 (67 aa).

The helical transmembrane segment at 8-24 (TWFTTILSTSFSIIHRL) threads the bilayer. At K54 the chain carries N6-acetyllysine; alternate. The residue at position 54 (K54) is an N6-succinyllysine; alternate. K57 bears the N6-acetyllysine mark.

This sequence belongs to the ATPase protein 8 family. In terms of assembly, component of the ATP synthase complex composed at least of ATP5F1A/subunit alpha, ATP5F1B/subunit beta, ATP5MC1/subunit c (homooctomer), MT-ATP6/subunit a, MT-ATP8/subunit 8, ATP5ME/subunit e, ATP5MF/subunit f, ATP5MG/subunit g, ATP5MK/subunit k, ATP5MJ/subunit j, ATP5F1C/subunit gamma, ATP5F1D/subunit delta, ATP5F1E/subunit epsilon, ATP5PF/subunit F6, ATP5PB/subunit b, ATP5PD/subunit d, ATP5PO/subunit OSCP. ATP synthase complex consists of a soluble F(1) head domain (subunits alpha(3) and beta(3)) - the catalytic core - and a membrane F(0) domain - the membrane proton channel (subunits c, a, 8, e, f, g, k and j). These two domains are linked by a central stalk (subunits gamma, delta, and epsilon) rotating inside the F1 region and a stationary peripheral stalk (subunits F6, b, d, and OSCP). Interacts with PRICKLE3.

The protein resides in the mitochondrion membrane. Its function is as follows. Subunit 8, of the mitochondrial membrane ATP synthase complex (F(1)F(0) ATP synthase or Complex V) that produces ATP from ADP in the presence of a proton gradient across the membrane which is generated by electron transport complexes of the respiratory chain. ATP synthase complex consist of a soluble F(1) head domain - the catalytic core - and a membrane F(1) domain - the membrane proton channel. These two domains are linked by a central stalk rotating inside the F(1) region and a stationary peripheral stalk. During catalysis, ATP synthesis in the catalytic domain of F(1) is coupled via a rotary mechanism of the central stalk subunits to proton translocation. In vivo, can only synthesize ATP although its ATP hydrolase activity can be activated artificially in vitro. Part of the complex F(0) domain. This Glis glis (Fat dormouse) protein is ATP synthase F(0) complex subunit 8.